The chain runs to 368 residues: DNA replication and repair protein RecF (368 aa).

30 to 37 is a binding site for ATP; the sequence is GDNGAGKT.

The protein belongs to the RecF family.

It localises to the cytoplasm. In terms of biological role, the RecF protein is involved in DNA metabolism; it is required for DNA replication and normal SOS inducibility. RecF binds preferentially to single-stranded, linear DNA. It also seems to bind ATP. The protein is DNA replication and repair protein RecF of Xanthomonas oryzae pv. oryzae (strain KACC10331 / KXO85).